The following is a 217-amino-acid chain: Ribosomal RNA small subunit methyltransferase G (217 aa).

Residues G79, F84, 130–131 (AE), and R148 each bind S-adenosyl-L-methionine.

This sequence belongs to the methyltransferase superfamily. RNA methyltransferase RsmG family.

The protein resides in the cytoplasm. The catalysed reaction is guanosine(527) in 16S rRNA + S-adenosyl-L-methionine = N(7)-methylguanosine(527) in 16S rRNA + S-adenosyl-L-homocysteine. Functionally, specifically methylates the N7 position of guanine in position 527 of 16S rRNA. This is Ribosomal RNA small subunit methyltransferase G from Myxococcus xanthus (strain DK1622).